The primary structure comprises 152 residues: Small ribosomal subunit protein uS15 (152 aa).

A compositionally biased stretch (basic residues) spans 1 to 11 (MAKMHTKRKGK). Residues 1 to 24 (MAKMHTKRKGKSSSTRPNRTEPPE) form a disordered region.

The protein belongs to the universal ribosomal protein uS15 family. As to quaternary structure, part of the 30S ribosomal subunit.

The polypeptide is Small ribosomal subunit protein uS15 (Methanosarcina mazei (strain ATCC BAA-159 / DSM 3647 / Goe1 / Go1 / JCM 11833 / OCM 88) (Methanosarcina frisia)).